Reading from the N-terminus, the 635-residue chain is MSPFGSKKNRSLSVRVSTFDSELEFKLEPRASGQDLFDLVCRTIGLRESWYFGLQYVDTRSNVSWLKMEKRVRDQRVELHASNNVYVFSFYAKFFPENVSEELIQEITQHLFFLQVKQSILSMDIYCRPEASVLLASYAVHVQYGPYDYETYKDGMLAGGELLPKGVTDQYQMTPEMWEERIKTWYMDHEPMTRDEVEMEYLKIAQDLDMYGVNYFPITNKNKTKLWLGVTSVGLNIYDERDKLTPKTTFQWNEIRHVSFDDKKFTIRLVDAKVSNFIFYSQDLHINKMILDLCKGNHDLYMRRRKPDTMEIQQMKAQAKEEKQRRQIERKKFIREKKLREKAEHERYELEKSMEHLQNEMRMANDALRRSEETKELYFEKSRVNEEQMQLTECKANHFKTEMDRLRERQMKIEREKHDLEKKIRDADFYVHQLTVENDKREAETEKLRKELICAKMAEREATARLLEFLNSGRKSSTDSLLTASSVSHAANTASSMAAISTPSLITSSSTNDLETAGGAELTTHSSHYLVQGDNSSGISDDFEPKEFILTDNEMEQITNEMERNHLDYLRNSKQVQSQLQTLRSEIAPHKIEENQSNLDILSEAQIKAGENKYSTLKKLKSGSTKARVAFFEEL.

One can recognise an FERM domain in the interval 12 to 305; sequence LSVRVSTFDS…GNHDLYMRRR (294 aa).

As to quaternary structure, interacts with Moe and arm at the adherens junction. Forms a complex with Kibra and Ex. Interacts (via FERM domain) with Sav (via FBM motif). Interacts with Schip1. Expressed predominantly in the germline. Expressed in the developing oocyte from stage 6 to the end of oogenesis and in the apical ends of follical cells from stage 10. Ubiquitous expression throughout embryogenesis with enhanced expression in mesoderm of early embryos and midgut of late embryos. In embryonic CNS, expression is seen in neuropil and developing brain and is enhanced in neuronal cell bodies. In embryonic PNS, expression is seen within the cell body. In third instar larvae, expression is uniform in the eye imaginal disk and is enhanced at the morphogenetic furrow. In pupal eyes, expression is seen in the cytoplasm of secondary and tertiary pigment cells, bristle precursor cells and rhabdomeres.

The protein localises to the cell junction. It is found in the adherens junction. The protein resides in the cell membrane. Its subcellular location is the cytoplasm. It localises to the cytoskeleton. The protein localises to the apical cell membrane. It is found in the cell projection. The protein resides in the rhabdomere. Regulator of the Hippo/SWH (Sav/Wts/Hpo) signaling pathway, a signaling pathway that plays a pivotal role in organ size control and tumor suppression by restricting proliferation and promoting apoptosis. The core of this pathway is composed of a kinase cascade wherein Hippo (Hpo), in complex with its regulatory protein Salvador (Sav), phosphorylates and activates Warts (Wts) in complex with its regulatory protein Mats, which in turn phosphorylates and inactivates the Yorkie (Yki) oncoprotein. Mer acts synergistically along with Ex and Kibra to regulate the Hippo signaling pathway. The sequence is that of Moesin/ezrin/radixin homolog 2 (Mer) from Drosophila melanogaster (Fruit fly).